The following is a 607-amino-acid chain: UvrABC system protein C (607 aa).

The 79-residue stretch at 16–94 (HLPGVYRHLD…IKSLRPRYNI (79 aa)) folds into the GIY-YIG domain. Residues 203 to 238 (REVMDEIEARMQQASGELRFEEAAVLRDQMGSLSKV) enclose the UVR domain.

This sequence belongs to the UvrC family. Interacts with UvrB in an incision complex.

It is found in the cytoplasm. The UvrABC repair system catalyzes the recognition and processing of DNA lesions. UvrC both incises the 5' and 3' sides of the lesion. The N-terminal half is responsible for the 3' incision and the C-terminal half is responsible for the 5' incision. The protein is UvrABC system protein C of Bordetella avium (strain 197N).